We begin with the raw amino-acid sequence, 274 residues long: Large ribosomal subunit protein uL2 (274 aa).

2 disordered regions span residues 34–53 (IAPIKNSGGRNSQGKMTMRY) and 216–274 (RRPR…RRKK).

It belongs to the universal ribosomal protein uL2 family. As to quaternary structure, part of the 50S ribosomal subunit. Forms a bridge to the 30S subunit in the 70S ribosome.

One of the primary rRNA binding proteins. Required for association of the 30S and 50S subunits to form the 70S ribosome, for tRNA binding and peptide bond formation. It has been suggested to have peptidyltransferase activity; this is somewhat controversial. Makes several contacts with the 16S rRNA in the 70S ribosome. In Flavobacterium psychrophilum (strain ATCC 49511 / DSM 21280 / CIP 103535 / JIP02/86), this protein is Large ribosomal subunit protein uL2.